The following is a 205-amino-acid chain: Beta-crystallin B2 (205 aa).

Ala-2 carries the post-translational modification N-acetylalanine. The tract at residues 2 to 16 is N-terminal arm; it reads ASDHQTQAGKPQSLN. 2 consecutive Beta/gamma crystallin 'Greek key' domains span residues 17–56 and 57–101; these read PKII…LVQA and GPWV…RPIK. A connecting peptide region spans residues 102–106; that stretch reads VDSQE. 2 Beta/gamma crystallin 'Greek key' domains span residues 107–148 and 149–191; these read HKII…RVQS and GTWV…RRIR. A C-terminal arm region spans residues 193–205; that stretch reads MQWHQRGAFHPSN.

It belongs to the beta/gamma-crystallin family. Homo/heterodimer, or complexes of higher-order. The structure of beta-crystallin oligomers seems to be stabilized through interactions between the N-terminal arms.

Functionally, crystallins are the dominant structural components of the vertebrate eye lens. This Homo sapiens (Human) protein is Beta-crystallin B2 (CRYBB2).